A 1675-amino-acid polypeptide reads, in one-letter code: Clathrin heavy chain 1 (1675 aa).

N-acetylalanine is present on A2. Residues 2–479 form a globular terminal domain region; it reads AQILPIRFQE…VDPTLALSVY (478 aa). WD40-like repeat stretches follow at residues 24–67, 68–107, 108–149, 150–195, 196–257, 258–301, and 302–330; these read NIGF…RPIS, ADSA…MTDD, VTFW…SSLA, GCQI…QPIE, GHAA…PEAQ, NDFP…ISGE, and TIFV…VCVE. Position 67 is a phosphoserine (S67). Residue T105 is modified to Phosphothreonine. Y184 is subject to Phosphotyrosine. T394 carries the phosphothreonine modification. Residues 449–465 are binding site for the uncoating ATPase, involved in lattice disassembly; it reads EKWLKEDKLECSEELGD. Positions 480-523 are flexible linker; that stretch reads LRANVPNKVIQCFAETGQVQKIVLYAKKVGYTPDWIFLLRNVMR. Residues 524-634 form a distal segment region; it reads ISPDQGQQFA…RALEHFTDLY (111 aa). Positions 524 to 1675 are heavy chain arm; that stretch reads ISPDQGQQFA…QPQPGFGYSM (1152 aa). CHCR repeat units lie at residues 537–683, 686–828, 833–972, 979–1124, 1128–1269, 1274–1420, and 1423–1566; these read VQDE…QICV, ASKY…SEDV, ILVV…PLID, LSET…VKEA, YIKA…FRLA, LHIV…LLLN, and LMVL…RECF. At Y634 the chain carries Phosphotyrosine. A proximal segment region spans residues 639 to 1675; it reads AVVHTHLLNP…QPQPGFGYSM (1037 aa). K737 carries the post-translational modification N6-succinyllysine. An N6-acetyllysine modification is found at K856. A Phosphotyrosine modification is found at Y899. S1167 carries the post-translational modification Phosphoserine. At Y1206 the chain carries Phosphotyrosine. Residues 1213–1522 form an involved in binding clathrin light chain region; that stretch reads AAKLLYNNVS…YLFKGNNRWK (310 aa). The residue at position 1229 (S1229) is a Phosphoserine. K1441 carries the post-translational modification N6-acetyllysine; alternate. K1441 bears the N6-succinyllysine; alternate mark. 2 positions are modified to phosphotyrosine: Y1477 and Y1487. S1494 bears the Phosphoserine mark. K1501 carries the N6-acetyllysine modification. A trimerization region spans residues 1550 to 1675; that stretch reads AEELLQWFLQ…QPQPGFGYSM (126 aa).

Belongs to the clathrin heavy chain family. As to quaternary structure, clathrin triskelions, composed of 3 heavy chains and 3 light chains, are the basic subunits of the clathrin coat. In the presence of light chains, hub assembly is influenced by both the pH and the concentration of calcium. Interacts with HIP1. Interacts with DENND1A, DENND1B and DENND1C. Interacts with ERBB2. Interacts with FKBP6. Interacts with OCRL. Interacts with CKAP5 and TACC3 forming the TACC3/ch-TOG/clathrin complex located at spindle inter-microtubules bridges; the complex implicates clathrin triskelions; TACC3 and CLTC are proposed to form a composite microtubule interaction surface. Plays a role in early autophagosome formation. Interacts with ATG16L1 (via N-terminus). Interacts with RFTN1; the interaction occurs in response to pathogens. Interacts with USP2 isoform 2. Interacts with TMEM106B (via N-terminus). Interacts with DNAJC6; this interaction produces a local change in heavy-chain contacts, creating a detectable global distortion of the clathrin coat and leads to the recruitment of HSPA8.

It is found in the cytoplasmic vesicle membrane. It localises to the membrane. The protein localises to the coated pit. Its subcellular location is the melanosome. The protein resides in the cytoplasm. It is found in the cytoskeleton. It localises to the spindle. Clathrin is the major protein of the polyhedral coat of coated pits and vesicles. Two different adapter protein complexes link the clathrin lattice either to the plasma membrane or to the trans-Golgi network. Acts as a component of the TACC3/ch-TOG/clathrin complex proposed to contribute to stabilization of kinetochore fibers of the mitotic spindle by acting as inter-microtubule bridge. The TACC3/ch-TOG/clathrin complex is required for the maintenance of kinetochore fiber tension. Plays a role in early autophagosome formation. Interaction with DNAJC6 mediates the recruitment of HSPA8 to the clathrin lattice and creates local destabilization of the lattice promoting uncoating. The protein is Clathrin heavy chain 1 of Mus musculus (Mouse).